An 86-amino-acid polypeptide reads, in one-letter code: Anti-adapter protein IraP (86 aa).

Residues 1 to 38 (MKNLIAELLVKLAQKEEEAKELTVQVEALEIVVTALLR) adopt a coiled-coil conformation.

Belongs to the IraP family. As to quaternary structure, interacts with RssB.

It is found in the cytoplasm. Functionally, inhibits RpoS proteolysis by regulating RssB activity, thereby increasing the stability of the sigma stress factor RpoS especially during phosphate starvation, but also in stationary phase and during nitrogen starvation. Its effect on RpoS stability is due to its interaction with RssB, which probably blocks the interaction of RssB with RpoS, and the consequent delivery of the RssB-RpoS complex to the ClpXP protein degradation pathway. The protein is Anti-adapter protein IraP of Klebsiella pneumoniae (strain 342).